We begin with the raw amino-acid sequence, 231 residues long: MAKDTTGRMHVQVKTGGKRKLSSKLWLERQLNDPYVAQAKRDGYRSRATYKLIEIDDKYHLLKPGMTVVDLGAAPGGWSQIAARRVGAEAGKGKVIAIDLLEMGEVPGVTFTQMDFHAQDAPEKLRAMLGGRADVVMSDMAANTTGHRKTDQLRIVGLVELAAHFAGEVLKPGGSFLAKTFQSGADAELLAQLKRDYATVRHVKPAASRQDSSERYVLAMGFRGGEPAELL.

S-adenosyl-L-methionine-binding residues include Gly-76, Trp-78, Asp-99, Asp-115, and Asp-139. The active-site Proton acceptor is the Lys-179.

Belongs to the class I-like SAM-binding methyltransferase superfamily. RNA methyltransferase RlmE family.

The protein resides in the cytoplasm. It carries out the reaction uridine(2552) in 23S rRNA + S-adenosyl-L-methionine = 2'-O-methyluridine(2552) in 23S rRNA + S-adenosyl-L-homocysteine + H(+). Specifically methylates the uridine in position 2552 of 23S rRNA at the 2'-O position of the ribose in the fully assembled 50S ribosomal subunit. This is Ribosomal RNA large subunit methyltransferase E from Bradyrhizobium sp. (strain BTAi1 / ATCC BAA-1182).